Reading from the N-terminus, the 927-residue chain is Solute carrier family 12 protein B0303.11 (927 aa).

Residues 1–23 (MPSSTASSEDAPITSTAWMNWKD) are Cytoplasmic-facing. A helical transmembrane segment spans residues 24 to 44 (VFLKCVQPMLAVVLLLRFSSI). Residues 45–53 (VDEAGFTTT) lie on the Extracellular side of the membrane. A helical transmembrane segment spans residues 54–74 (IILVFFTFLVSLVTGWSACTV). The Cytoplasmic portion of the chain corresponds to 75-95 (VSRKSSEVGFVKTMLAYSSTE). A helical transmembrane segment spans residues 96–116 (FAISFSIIYLFCLLVATSTFL). Over 117–141 (TSAAEAVLHIFSTFSLELLDGATHD) the chain is Extracellular. Residues 142-159 (LRLVSSVLSLITLALCMV) traverse the membrane as a helical segment. At 160–165 (RNRNAR) the chain is on the cytoplasmic side. The helical transmembrane segment at 166–186 (FVRTFIFALTCIAIALQLSSV) threads the bilayer. The Extracellular portion of the chain corresponds to 187–212 (MFRYGEYQLRRVSDRNAMIPSPPNEE). A helical transmembrane segment spans residues 213-233 (ISTIFAQLFPAAMCGLTILNI). The Cytoplasmic portion of the chain corresponds to 234-244 (GSKLQNTAPRG). The helical transmembrane segment at 245 to 265 (ALIAIAVSACFYGAAAMLDYV) threads the bilayer. Topologically, residues 266–284 (EFFARTSTSNSTGSAEYNE) are extracellular. The N-linked (GlcNAc...) asparagine glycan is linked to Asn-275. A helical transmembrane segment spans residues 285–305 (FLSYIYTTVPMAIVITLACVL). Topologically, residues 306-345 (SAVSTLKYAAVILQSLGRSNQCRCILWLAKGFGERDIPIR) are cytoplasmic. Residues 346–366 (CLLLLSTVQILVSAIGSYDIL) traverse the membrane as a helical segment. Position 367 (Cys-367) is a topological domain, extracellular. A helical membrane pass occupies residues 368-388 (IPTTVFYLFAYALFNFYVFLV). At 389–394 (KLSDPE) the chain is on the cytoplasmic side. Residues 395–415 (IPSPPTLLSLAISAACFIASL) form a helical membrane-spanning segment. The Extracellular portion of the chain corresponds to 416–419 (YTNR). Residues 420-440 (HLALFIASIFAISYCSLLYII) traverse the membrane as a helical segment. The Cytoplasmic segment spans residues 441 to 927 (RRERNEDGEE…SMSALRLKFP (487 aa)).

The protein belongs to the SLC12A transporter family.

The protein localises to the cell membrane. This is Solute carrier family 12 protein B0303.11 from Caenorhabditis elegans.